A 635-amino-acid chain; its full sequence is MSHTPTPAAGSGHASANSQTALVIGAIGVVFGDIGTSPLYTLKEAFSPHYGLTPDHDTVLGILSLVFWALMLVVTLKYVTVIMRADNDGEGGIMALTALAQRTLPGGSRSMYVVGILGIFGASLFFGDGVITPAISVLSAVEGLQVAAPKLEAFVVPITLVVLGMLFLAQRFGTERVGKAFGPITLVWFFALGAIGVYNMARAPEVLHALNPWWGVLFFVEHNWHAVFVLGAVVLAVTGGEALYADMGHFGAKAIRRSWQFVVLPMLTLTYLGQGALVLRDPSAVSNPFYEAVPEWALYPMIVLATAATVIASQALITGAYSVASQAMQLGYIPRMHIRHTSHSTIGQIYVPAVNWCLLLAVAVAVVGFGDSTSLATAYGVSVTGTMLITTVLMVIYARANPRVPAPLLWLFALVFLAVDCAFFYANIIKFLDGAWFPLLLGLILFTLMRTWRRGRKLLHDEIRKDGIKLDTFLPGLMLAPPVRVPGTAVFLTADPMVVPHALMHNLKHNKVLHERNVFLTVETLQGPYAAAGKRLKIEAIGDEFYRVHVRFGFMETPDVPLALMRSCDQGGIYFDPMDTTYFASRETIVASANRGMPIWRDKLFALMHRNAAPATGFFRIPGNRLVELGAQVEI.

A run of 12 helical transmembrane segments spans residues 22 to 42 (LVIG…LYTL), 59 to 79 (VLGI…LKYV), 111 to 131 (MYVV…DGVI), 148 to 168 (APKL…MLFL), 180 to 200 (AFGP…VYNM), 216 to 236 (VLFF…VVLA), 259 to 279 (WQFV…ALVL), 297 to 317 (ALYP…QALI), 349 to 369 (IYVP…VVGF), 378 to 398 (AYGV…VIYA), 404 to 424 (VPAP…CAFF), and 428 to 448 (IIKF…LFTL).

The protein belongs to the HAK/KUP transporter (TC 2.A.72) family.

Its subcellular location is the cell inner membrane. It catalyses the reaction K(+)(in) + H(+)(in) = K(+)(out) + H(+)(out). In terms of biological role, transport of potassium into the cell. Likely operates as a K(+):H(+) symporter. This Xanthomonas oryzae pv. oryzae (strain KACC10331 / KXO85) protein is Probable potassium transport system protein Kup.